The chain runs to 173 residues: Photosystem I assembly protein Ycf3 (173 aa).

TPR repeat units follow at residues 36-69 (AFAY…EQGE), 73-106 (SYIL…NPRL), and 121-154 (GELS…APNN).

Belongs to the Ycf3 family.

The protein localises to the cellular thylakoid membrane. Essential for the assembly of the photosystem I (PSI) complex. May act as a chaperone-like factor to guide the assembly of the PSI subunits. This is Photosystem I assembly protein Ycf3 from Synechococcus sp. (strain JA-2-3B'a(2-13)) (Cyanobacteria bacterium Yellowstone B-Prime).